A 581-amino-acid chain; its full sequence is Sulfate adenylyltransferase (581 aa).

Positions 1–176 are N-terminal; it reads MANAPHGGVL…VQAIQAPTHF (176 aa). Residues 177–401 form a catalytic region; it reads DYVPLRFTPA…LRESYPPRPQ (225 aa). Residue Gln204 coordinates sulfate. Residues 204 to 207 and 298 to 301 contribute to the ATP site; these read QTRN and GRDH. Active-site residues include Thr205, Arg206, and Asn207. Arg206 is a binding site for sulfate. Ala302 contacts sulfate. An ATP-binding site is contributed by Met340. Positions 402-581 are allosteric regulation domain; adenylyl-sulfate kinase-like; the sequence is QGFTILLTGL…IMILESQNLV (180 aa). Residues 441–444, 486–487, and Arg526 each bind 3'-phosphoadenylyl sulfate; these read EELR and TA.

The protein in the N-terminal section; belongs to the sulfate adenylyltransferase family. It in the C-terminal section; belongs to the APS kinase family. In terms of assembly, homohexamer. Dimer of trimers.

It localises to the cytoplasm. It catalyses the reaction sulfate + ATP + H(+) = adenosine 5'-phosphosulfate + diphosphate. Its pathway is sulfur metabolism; hydrogen sulfide biosynthesis; sulfite from sulfate: step 1/3. Its activity is regulated as follows. Allosterically inhibited by 3'-phosphoadenosine 5'-phosphosulfate (PAPS). Catalyzes the first intracellular reaction of sulfate assimilation, forming adenosine-5'-phosphosulfate (APS) from inorganic sulfate and ATP. Plays an important role in sulfate activation as a component of the biosynthesis pathway of sulfur-containing amino acids. This is Sulfate adenylyltransferase from Cryptococcus neoformans var. neoformans serotype D (strain B-3501A) (Filobasidiella neoformans).